A 465-amino-acid chain; its full sequence is Hexokinase-4 (465 aa).

One can recognise a Hexokinase domain in the interval 10–454 (ATKKEKVEQI…SGRGAALVSA (445 aa)). Positions 67 to 203 (EGSEVGDFLS…DFEMDVVAMV (137 aa)) are hexokinase small subdomain. 78-83 (DLGGTN) provides a ligand contact to ATP. Substrate is bound by residues 151-152 (SF), 168-169 (TK), and 204-205 (ND). Residues 204–443 (NDTVATMISC…CEITFIESEE (240 aa)) form a hexokinase large subdomain region. Threonine 228 is a binding site for ATP. Substrate is bound by residues asparagine 231, glutamate 256, and glutamate 290. ATP-binding positions include 295 to 296 (GK), 332 to 336 (TRFVS), and 411 to 415 (SVYKL).

This sequence belongs to the hexokinase family. As to quaternary structure, monomer. Interacts with MIDN; the interaction occurs preferentially at low glucose levels and results in inhibition of hexokinase activity. Interacts with GCKR; leading to sequestration in the nucleus. As to expression, expression is restricted to the liver and pancreatic islets (at protein level).

The protein resides in the cytoplasm. The protein localises to the nucleus. It localises to the mitochondrion. The enzyme catalyses a D-hexose + ATP = a D-hexose 6-phosphate + ADP + H(+). It catalyses the reaction D-fructose + ATP = D-fructose 6-phosphate + ADP + H(+). The catalysed reaction is D-glucose + ATP = D-glucose 6-phosphate + ADP + H(+). It carries out the reaction D-mannose + ATP = D-mannose 6-phosphate + ADP + H(+). Its pathway is carbohydrate metabolism; hexose metabolism. It participates in carbohydrate degradation; glycolysis; D-glyceraldehyde 3-phosphate and glycerone phosphate from D-glucose: step 1/4. Its activity is regulated as follows. Subject to allosteric regulation. Low glucose and high fructose-6-phosphate triggers association with the inhibitor GCKR followed by sequestration in the nucleus. Its function is as follows. Catalyzes the phosphorylation of hexose, such as D-glucose, D-fructose and D-mannose, to hexose 6-phosphate (D-glucose 6-phosphate, D-fructose 6-phosphate and D-mannose 6-phosphate, respectively). Compared to other hexokinases, has a weak affinity for D-glucose, and is effective only when glucose is abundant. Mainly expressed in pancreatic beta cells and the liver and constitutes a rate-limiting step in glucose metabolism in these tissues. Since insulin secretion parallels glucose metabolism and the low glucose affinity of GCK ensures that it can change its enzymatic activity within the physiological range of glucose concentrations, GCK acts as a glucose sensor in the pancreatic beta cell. In pancreas, plays an important role in modulating insulin secretion. In liver, helps to facilitate the uptake and conversion of glucose by acting as an insulin-sensitive determinant of hepatic glucose usage. Required to provide D-glucose 6-phosphate for the synthesis of glycogen. Mediates the initial step of glycolysis by catalyzing phosphorylation of D-glucose to D-glucose 6-phosphate. This Rattus norvegicus (Rat) protein is Hexokinase-4.